The chain runs to 148 residues: Snaclec 7 (148 aa).

Positions 1-23 (MGRFIFVSFGLLVVFLSLSGTGA) are cleaved as a signal peptide. Intrachain disulfides connect cysteine 27–cysteine 38, cysteine 55–cysteine 144, and cysteine 121–cysteine 136. In terms of domain architecture, C-type lectin spans 34–145 (HERHCYKVIN…CSSTHPFVCK (112 aa)).

The protein belongs to the snaclec family. In terms of assembly, heterodimer; disulfide-linked. In terms of tissue distribution, expressed by the venom gland.

Its subcellular location is the secreted. In terms of biological role, interferes with one step of hemostasis (modulation of platelet aggregation, or coagulation cascade, for example). The polypeptide is Snaclec 7 (Echis pyramidum leakeyi (Leakey's carpet viper)).